The sequence spans 398 residues: Nicotinate phosphoribosyltransferase (398 aa).

A Phosphohistidine; by autocatalysis modification is found at His221.

Belongs to the NAPRTase family. Post-translationally, transiently phosphorylated on a His residue during the reaction cycle. Phosphorylation strongly increases the affinity for substrates and increases the rate of nicotinate D-ribonucleotide production. Dephosphorylation regenerates the low-affinity form of the enzyme, leading to product release.

The catalysed reaction is nicotinate + 5-phospho-alpha-D-ribose 1-diphosphate + ATP + H2O = nicotinate beta-D-ribonucleotide + ADP + phosphate + diphosphate. The protein operates within cofactor biosynthesis; NAD(+) biosynthesis; nicotinate D-ribonucleotide from nicotinate: step 1/1. Catalyzes the synthesis of beta-nicotinate D-ribonucleotide from nicotinate and 5-phospho-D-ribose 1-phosphate at the expense of ATP. The chain is Nicotinate phosphoribosyltransferase from Buchnera aphidicola subsp. Schizaphis graminum (strain Sg).